Reading from the N-terminus, the 330-residue chain is FKBP12-interacting protein of 37 kDa (330 aa).

Residue Met1 is modified to N-acetylmethionine. The segment covering 1-12 (MEFSSQDDDFGG) has biased composition (acidic residues). The disordered stretch occupies residues 1–43 (MEFSSQDDDFGGDDSAANATRASGNRRSFGDLEDDEDDIFGST). Over residues 17-26 (ANATRASGNR) the composition is skewed to polar residues. A coiled-coil region spans residues 56–308 (SLRGSLKNCK…KGLEIVSELV (253 aa)).

The protein belongs to the fl(2)d family. Forms homodimers. Interacts with MTA/EMB1706. Interacts with FKBP12; interaction is inhibited by the immunosuppressive drug FK506. Interacts with VIR. Associates with MTA, MTB, VIR and HAKAI to form the m6A writer complex which is essential for adenosine methylation at specific mRNA sequences. As to expression, ubiquitously expressed with higher levels in primary and lateral roots, leaves, trichomes, and in pollen grains (at protein level).

Its subcellular location is the nucleus speckle. It localises to the nucleus. The protein localises to the nucleoplasm. Functionally, probable regulatory subunit of the N6-methyltransferase complex, a multiprotein complex that mediates N6-methyladenosine (m6A) methylation at the 5'-[AG]GAC-3' consensus sites of some mRNAs. Associates with MTA, MTB, VIR and HAKAI to form the m6A writer complex which is essential for adenosine methylation at specific mRNA sequences. N6-methyladenosine (m6A) plays a role in mRNA stability, processing, translation efficiency and editing. Essential protein required during endosperm development and embryogenesis. Involved in endoreduplication, especially in trichomes. May play a role in splicing events. The sequence is that of FKBP12-interacting protein of 37 kDa from Arabidopsis thaliana (Mouse-ear cress).